The sequence spans 169 residues: uncharacterized protein (169 aa).

3 helical membrane-spanning segments follow: residues Ala25–Phe45, Phe57–Phe77, and Leu91–Val111.

This sequence belongs to the major facilitator superfamily. Allantoate permease family.

The protein resides in the membrane. This is an uncharacterized protein from Saccharomyces cerevisiae (strain ATCC 204508 / S288c) (Baker's yeast).